We begin with the raw amino-acid sequence, 89 residues long: MHNISFKLLLLCDLFLSSSSVRHNLAVGDVCATNEECRINCQCDAAYCDLSCNMCVYMLHVMDTIDANIPNQPCISEYQNCGKKTSSLQ.

The N-terminal stretch at 1-20 (MHNISFKLLLLCDLFLSSSS) is a signal peptide. 2 disulfides stabilise this stretch: cysteine 31-cysteine 48 and cysteine 37-cysteine 55.

It belongs to the DEFL family.

It is found in the secreted. The chain is Putative defensin-like protein 254 from Arabidopsis thaliana (Mouse-ear cress).